The primary structure comprises 255 residues: MKRKVQVKNITIGEGRPKICVPIIGKNKKDIIKEAKELKDACLDIIEWRVDFFENVENIKEVKEVLYELRSYIHDIPLLFTFRSVVEGGEKLISRDYYTTLNKEISNTGLVDLIDVELFMGDEVIDEVVNFAHKKEVKVIISNHDFNKTPKKEEIVSRLCRMQELGADLPKIAVMPQNEKDVLVLLEATNEMFKIYADRPIITMSMSGMGVISRLCGEIFGSALTFGAAKSVSAPGQISFKELNSVLNLLHKSIN.

Residues 47–49 (EWR) and R83 each bind 3-dehydroquinate. H144 acts as the Proton donor/acceptor in catalysis. The active-site Schiff-base intermediate with substrate is K171. Residues R214, S233, and Q237 each contribute to the 3-dehydroquinate site.

It belongs to the type-I 3-dehydroquinase family. As to quaternary structure, homodimer or homotetramer.

It carries out the reaction 3-dehydroquinate = 3-dehydroshikimate + H2O. It functions in the pathway metabolic intermediate biosynthesis; chorismate biosynthesis; chorismate from D-erythrose 4-phosphate and phosphoenolpyruvate: step 3/7. In terms of biological role, involved in the third step of the chorismate pathway, which leads to the biosynthesis of aromatic amino acids. Catalyzes the cis-dehydration of 3-dehydroquinate (DHQ) and introduces the first double bond of the aromatic ring to yield 3-dehydroshikimate. The reaction involves the formation of an imine intermediate between the keto group of 3-dehydroquinate and the epsilon-amino group of Lys-170 at the active site. The chain is 3-dehydroquinate dehydratase from Clostridioides difficile (strain 630) (Peptoclostridium difficile).